Consider the following 106-residue polypeptide: Evasin P1168 (106 aa).

Positions 1 to 24 (MEVKISTFLQIAVLIVLGIHLIAA) are cleaved as a signal peptide. Disulfide bonds link Cys-45-Cys-67, Cys-49-Cys-69, and Cys-60-Cys-80. N-linked (GlcNAc...) asparagine glycosylation is found at Asn-48, Asn-54, and Asn-64.

Its subcellular location is the secreted. Functionally, salivary chemokine-binding protein which binds to host chemokines CXCL1, CXCL2 and CXCL8. The chain is Evasin P1168 from Ixodes ricinus (Common tick).